A 368-amino-acid polypeptide reads, in one-letter code: Ribosomal RNA large subunit methyltransferase M (368 aa).

S-adenosyl-L-methionine is bound by residues serine 192, 225-228 (APGG), aspartate 244, aspartate 264, and aspartate 281. Lysine 310 acts as the Proton acceptor in catalysis.

Belongs to the class I-like SAM-binding methyltransferase superfamily. RNA methyltransferase RlmE family. RlmM subfamily. In terms of assembly, monomer.

It localises to the cytoplasm. It catalyses the reaction cytidine(2498) in 23S rRNA + S-adenosyl-L-methionine = 2'-O-methylcytidine(2498) in 23S rRNA + S-adenosyl-L-homocysteine + H(+). In terms of biological role, catalyzes the 2'-O-methylation at nucleotide C2498 in 23S rRNA. The sequence is that of Ribosomal RNA large subunit methyltransferase M from Colwellia psychrerythraea (strain 34H / ATCC BAA-681) (Vibrio psychroerythus).